Reading from the N-terminus, the 491-residue chain is Glutamyl-tRNA(Gln) amidotransferase subunit A (491 aa).

Catalysis depends on charge relay system residues K79 and S154. The active-site Acyl-ester intermediate is S178.

Belongs to the amidase family. GatA subfamily. In terms of assembly, heterotrimer of A, B and C subunits.

It catalyses the reaction L-glutamyl-tRNA(Gln) + L-glutamine + ATP + H2O = L-glutaminyl-tRNA(Gln) + L-glutamate + ADP + phosphate + H(+). Functionally, allows the formation of correctly charged Gln-tRNA(Gln) through the transamidation of misacylated Glu-tRNA(Gln) in organisms which lack glutaminyl-tRNA synthetase. The reaction takes place in the presence of glutamine and ATP through an activated gamma-phospho-Glu-tRNA(Gln). The sequence is that of Glutamyl-tRNA(Gln) amidotransferase subunit A from Natranaerobius thermophilus (strain ATCC BAA-1301 / DSM 18059 / JW/NM-WN-LF).